The chain runs to 424 residues: Histidine--tRNA ligase (424 aa).

The protein belongs to the class-II aminoacyl-tRNA synthetase family. In terms of assembly, homodimer.

It localises to the cytoplasm. The catalysed reaction is tRNA(His) + L-histidine + ATP = L-histidyl-tRNA(His) + AMP + diphosphate + H(+). The chain is Histidine--tRNA ligase from Yersinia pestis bv. Antiqua (strain Antiqua).